We begin with the raw amino-acid sequence, 181 residues long: Large ribosomal subunit protein uL10 (181 aa).

This sequence belongs to the universal ribosomal protein uL10 family. As to quaternary structure, part of the ribosomal stalk of the 50S ribosomal subunit. The N-terminus interacts with L11 and the large rRNA to form the base of the stalk. The C-terminus forms an elongated spine to which L12 dimers bind in a sequential fashion forming a multimeric L10(L12)X complex.

In terms of biological role, forms part of the ribosomal stalk, playing a central role in the interaction of the ribosome with GTP-bound translation factors. The chain is Large ribosomal subunit protein uL10 from Acidobacterium capsulatum (strain ATCC 51196 / DSM 11244 / BCRC 80197 / JCM 7670 / NBRC 15755 / NCIMB 13165 / 161).